The primary structure comprises 1340 residues: Lysine-specific demethylase ELF6 (1340 aa).

Residues 16-57 (APVFRPTDTEFADPIAYISKIEKEASAFGICKIIPPLPKPSK) enclose the JmjN domain. The tract at residues 195-245 (QRKRRGRGFYQRKTENNDPSGKNGEKSSPEVEKAPLASTSLSSQDSSKQKN) is disordered. Residues 217 to 227 (NGEKSSPEVEK) are compositionally biased toward basic and acidic residues. In terms of domain architecture, JmjC spans 262 to 428 (NSSWNLQMIA…VAKEAAVRRA (167 aa)). 3 residues coordinate Fe cation: histidine 305, glutamate 307, and histidine 396. A Nuclear localization signal 1 motif is present at residues 818–825 (GKKEEKII). Residues 1092-1225 (GEPLESSDIL…SRQQEVPTTT (134 aa)) are disordered. The segment covering 1099 to 1115 (DILSSSNGDEASSNGLQ) has biased composition (polar residues). Residues 1124–1133 (ESEVSSSENT) are compositionally biased toward low complexity. The segment covering 1188-1201 (SLKHTETSDEEKKP) has biased composition (basic and acidic residues). Over residues 1215-1225 (GSRQQEVPTTT) the composition is skewed to polar residues. 4 C2H2-type zinc fingers span residues 1228 to 1250 (NRCYLEGCKMTFESKAKLQTHKR), 1251 to 1275 (NRCTHEGCGKKFRAHKYLVLHQRVH), 1281 to 1305 (FECSWKGCSMTFKWQWARTEHLRLH), and 1311 to 1337 (YICKVDGCGLSFRFVSDYSRHRRKTMH). The Zn(2+) site is built by cysteine 1230, cysteine 1235, histidine 1248, cysteine 1253, cysteine 1258, histidine 1265, histidine 1271, histidine 1275, cysteine 1283, cysteine 1288, histidine 1301, histidine 1305, cysteine 1313, cysteine 1318, histidine 1331, and histidine 1337. A Nuclear localization signal 2 motif is present at residues 1248–1255 (HKRNRCTH). The segment at 1260-1333 (KKFRAHKYLV…FVSDYSRHRR (74 aa)) is DNA-binding.

Belongs to the JHDM3 histone demethylase family. As to quaternary structure, interacts with BZR2 (via N-terminus). In terms of tissue distribution, expressed at low levels in seedlings, cotyledons and leaves. Detected in inflorescences, stems, roots and siliques but not in shoot apical meristems or root tips. Accumulates in flowers and embryos.

Its subcellular location is the nucleus. It catalyses the reaction N(6),N(6),N(6)-trimethyl-L-lysyl(27)-[histone H3] + 2-oxoglutarate + O2 = N(6),N(6)-dimethyl-L-lysyl(27)-[histone H3] + formaldehyde + succinate + CO2. The catalysed reaction is N(6),N(6)-dimethyl-L-lysyl(27)-[histone H3] + 2-oxoglutarate + O2 = N(6)-methyl-L-lysyl(27)-[histone H3] + formaldehyde + succinate + CO2. Histone demethylase that demethylates 'Lys-27' (H3K27me) of histone H3, thus acting as a positive regulator of gene expression. Demethylates tri-methylated (H3K27me3) and di-methylated (H3K27me2) H3K27me. Inactive on H3K27me1, H3K4me3, H3K9me2 and H3K36me3. Acts as a repressor of the photoperiodic flowering pathway and of FT. May also be active on H3K4me. Binds around the transcription start site of the FT locus. Required for epigenetic reprogramming by resetting the expression of the floral repressor FLC locus, thus aluviating cold-mediated FLC epigenetically silencing occurring during vernalization and preventing inapropriate epigenetic states inheritence. Functionally, together with REF6, required for H3K27me3 resetting (especially in constitutive heterochromatin within the pericentromeric regions) and transgenerational inheritance of histone marks, thus acting in safeguarding genome and epigenome integrity during sexual reproduction. This chain is Lysine-specific demethylase ELF6, found in Arabidopsis thaliana (Mouse-ear cress).